The chain runs to 248 residues: Regulator of G-protein signaling 7-binding protein A (248 aa).

Residues 1–32 are disordered; that stretch reads MSSAPNGRKNRPRTAGTIFQIGGKAPSRESER. 2 S-palmitoyl cysteine lipidation sites follow: C243 and C244.

Belongs to the RGS7BP/RGS9BP family. Palmitoylated. Undergoes rapid palmitoylation turnover. Palmitoylation regulates the cell membrane and nuclear shuttling and the regulation of GPCR signaling. Upon depalmitoylation, it is targeted from the plasma membrane into the nucleus. GPCR signaling inhibits depalmitoylation and promotes localization to the plasma membrane.

Its subcellular location is the nucleus. It is found in the cytoplasm. The protein localises to the cell membrane. Functionally, regulator of G protein-coupled receptor (GPCR) signaling. Regulatory subunit of the R7-Gbeta5 complexes that acts by controlling the subcellular location of the R7-Gbeta5 complexes. When palmitoylated, it targets the R7-Gbeta5 complexes to the plasma membrane, leading to inhibit G protein alpha subunits. When it is unpalmitoylated, the R7-Gbeta5 complexes undergo a nuclear/cytoplasmic shuttling. This Danio rerio (Zebrafish) protein is Regulator of G-protein signaling 7-binding protein A (rgs7bpa).